We begin with the raw amino-acid sequence, 264 residues long: S-adenosylmethionine decarboxylase proenzyme (264 aa).

Serine 112 acts as the Schiff-base intermediate with substrate; via pyruvic acid in catalysis. The residue at position 112 (serine 112) is a Pyruvic acid (Ser); by autocatalysis. Histidine 117 functions as the Proton acceptor; for processing activity in the catalytic mechanism. Catalysis depends on cysteine 140, which acts as the Proton donor; for catalytic activity.

This sequence belongs to the prokaryotic AdoMetDC family. Type 2 subfamily. Heterooctamer of four alpha and four beta chains arranged as a tetramer of alpha/beta heterodimers. Pyruvate is required as a cofactor. Post-translationally, is synthesized initially as an inactive proenzyme. Formation of the active enzyme involves a self-maturation process in which the active site pyruvoyl group is generated from an internal serine residue via an autocatalytic post-translational modification. Two non-identical subunits are generated from the proenzyme in this reaction, and the pyruvate is formed at the N-terminus of the alpha chain, which is derived from the carboxyl end of the proenzyme. The post-translation cleavage follows an unusual pathway, termed non-hydrolytic serinolysis, in which the side chain hydroxyl group of the serine supplies its oxygen atom to form the C-terminus of the beta chain, while the remainder of the serine residue undergoes an oxidative deamination to produce ammonia and the pyruvoyl group blocking the N-terminus of the alpha chain.

It carries out the reaction S-adenosyl-L-methionine + H(+) = S-adenosyl 3-(methylsulfanyl)propylamine + CO2. It functions in the pathway amine and polyamine biosynthesis; S-adenosylmethioninamine biosynthesis; S-adenosylmethioninamine from S-adenosyl-L-methionine: step 1/1. In terms of biological role, catalyzes the decarboxylation of S-adenosylmethionine to S-adenosylmethioninamine (dcAdoMet), the propylamine donor required for the synthesis of the polyamines spermine and spermidine from the diamine putrescine. The polypeptide is S-adenosylmethionine decarboxylase proenzyme (Cronobacter sakazakii (strain ATCC BAA-894) (Enterobacter sakazakii)).